The sequence spans 556 residues: Oxygen-dependent choline dehydrogenase (556 aa).

An FAD-binding site is contributed by 4–33; that stretch reads DYIIIGAGSAGNVLATRLTEDPNTTVLLLE. The active-site Proton acceptor is His473.

It belongs to the GMC oxidoreductase family. FAD serves as cofactor.

The catalysed reaction is choline + A = betaine aldehyde + AH2. The enzyme catalyses betaine aldehyde + NAD(+) + H2O = glycine betaine + NADH + 2 H(+). It participates in amine and polyamine biosynthesis; betaine biosynthesis via choline pathway; betaine aldehyde from choline (cytochrome c reductase route): step 1/1. Its function is as follows. Involved in the biosynthesis of the osmoprotectant glycine betaine. Catalyzes the oxidation of choline to betaine aldehyde and betaine aldehyde to glycine betaine at the same rate. The chain is Oxygen-dependent choline dehydrogenase from Escherichia coli O6:K15:H31 (strain 536 / UPEC).